The sequence spans 55 residues: UPF0391 membrane protein Tbd_2772 (55 aa).

The next 2 membrane-spanning stretches (helical) occupy residues 1 to 21 (MFGWAITFLVIAIAAGIFGFA) and 28 to 48 (AWIAKVLFVVGLAAVLIMLVM).

This sequence belongs to the UPF0391 family.

The protein localises to the cell membrane. The sequence is that of UPF0391 membrane protein Tbd_2772 from Thiobacillus denitrificans (strain ATCC 25259 / T1).